The primary structure comprises 402 residues: Thyroid hormone receptor alpha (402 aa).

Residues 1 to 22 are disordered; sequence MEQKPSTLDPLSEPEDTRWLDG. The tract at residues 1–50 is modulating; it reads MEQKPSTLDPLSEPEDTRWLDGKRKRKSSQCLVKSSMSGYIPSYLDKDEQ. Ser12 carries the phosphoserine; by CK2 modification. Position 28 is a phosphoserine (Ser28). 8 residues coordinate Zn(2+): Cys51, Cys54, Cys68, Cys71, Cys89, Cys95, Cys105, and Cys108. 2 NR C4-type zinc fingers span residues 51–71 and 89–113; these read CVVC…CEGC and CKYD…FKKC. A DNA-binding region (nuclear receptor) is located at residues 51–125; sequence CVVCGDKATG…VGMAMDLVLD (75 aa). The region spanning 161–402 is the NR LBD domain; that stretch reads EEWELIHVVT…ELFPPLFLEV (242 aa). The 3,3',5-triiodo-L-thyronine site is built by Arg226 and Ser275.

It belongs to the nuclear hormone receptor family. NR1 subfamily. In terms of assembly, probably interacts with SFPQ.

The protein resides in the nucleus. Nuclear hormone receptor that can act as a repressor or activator of transcription. High affinity receptor for thyroid hormones, including triiodothyronine and thyroxine. In Aptenodytes patagonicus (King penguin), this protein is Thyroid hormone receptor alpha (THRA).